The following is a 256-amino-acid chain: Pimeloyl-[acyl-carrier protein] methyl ester esterase (256 aa).

The region spanning 15-242 is the AB hydrolase-1 domain; the sequence is HLVLLHGWGL…AAHAPFISHP (228 aa). Residues W22, 82–83, and 143–147 each bind substrate; these read SL and FLALQ. S82 (nucleophile) is an active-site residue. Residues D207 and H235 contribute to the active site. Residue H235 participates in substrate binding.

It belongs to the AB hydrolase superfamily. Carboxylesterase BioH family. In terms of assembly, monomer.

The protein resides in the cytoplasm. It carries out the reaction 6-carboxyhexanoyl-[ACP] methyl ester + H2O = 6-carboxyhexanoyl-[ACP] + methanol + H(+). Its pathway is cofactor biosynthesis; biotin biosynthesis. Functionally, the physiological role of BioH is to remove the methyl group introduced by BioC when the pimeloyl moiety is complete. It allows to synthesize pimeloyl-ACP via the fatty acid synthetic pathway through the hydrolysis of the ester bonds of pimeloyl-ACP esters. This chain is Pimeloyl-[acyl-carrier protein] methyl ester esterase, found in Escherichia coli O6:H1 (strain CFT073 / ATCC 700928 / UPEC).